Consider the following 1871-residue polypeptide: Girdin (1871 aa).

The Calponin-homology (CH) domain maps to 12–132 (QFMTSPLVTW…KLLLLLLGCA (121 aa)). The stretch at 196–425 (HLKRLIDERD…EMAQKQSMDE (230 aa)) forms a coiled coil. Phosphoserine is present on residues S233, S237, and S449. The stretch at 458–1385 (TSSRLLKLEM…KIMDQYKFYD (928 aa)) forms a coiled coil. Disordered stretches follow at residues 816-842 (ENKS…KRLR) and 1010-1035 (RQDE…RESQ). Phosphoserine is present on S1020. Basic and acidic residues predominate over residues 1026–1035 (EDNKWERESQ). S1387 is modified (phosphoserine). Positions 1390–1408 (RRRGNWITLKMRKLIKSKK) are phosphoinositide-binding. Over residues 1407–1416 (KKDINRERQK) the composition is skewed to basic and acidic residues. Disordered stretches follow at residues 1407–1459 (KKDI…LGTK) and 1559–1601 (TTSF…SNNN). S1417 bears the Phosphoserine; by PKB/AKT1 mark. 3 stretches are compositionally biased toward polar residues: residues 1417–1430 (SLTL…SSEG), 1445–1459 (VGSN…LGTK), and 1559–1578 (TTSF…STGS). Phosphothreonine is present on T1421. The short motif at 1672–1702 (KTGSPGSEVVTLQQFLEESNKLTSVQIKSSS) is the GBA element. T1673 is modified (phosphothreonine). S1675 bears the Phosphoserine mark. S1690 is subject to Phosphoserine; by PKC/PRKCQ. The tract at residues 1713–1823 (SLSVSSDFLG…GTTRRTSIHD (111 aa)) is SH2-like; required for interaction with growth factor receptors. At S1717 the chain carries Phosphoserine. The interval 1736–1871 (SGKTPGDFYD…KSRSREQQSS (136 aa)) is disordered. Positions 1743 to 1763 (FYDRRTTKPEFLRPGPRKTED) are enriched in basic and acidic residues. A phosphotyrosine mark is found at Y1765 and Y1799. Composition is skewed to polar residues over residues 1787-1799 (SSLS…SNPY) and 1807-1818 (SVISTAEGTTRR). Phosphoserine occurs at positions 1820 and 1837. Over residues 1820-1830 (SIHDFLTKDSR) the composition is skewed to basic and acidic residues. Over residues 1838 to 1851 (PPAAADSNTTAASN) the composition is skewed to low complexity. A compositionally biased stretch (basic and acidic residues) spans 1854-1871 (KVQESRNSKSRSREQQSS).

This sequence belongs to the CCDC88 family. In terms of assembly, homodimer. Interacts (via GBA motif) with guanine nucleotide-binding protein G(i) alpha subunits GNAI1, GNAI2 and GNAI3. Also interacts (via GNA motif) with guanine nucleotide-binding protein G(s) alpha subunit GNAS. Interaction with G(i) alpha subunits occurs before interaction with GNAS and is regulated by phosphorylation; phosphorylation at Ser-1675 enhances binding to G(i) alpha subunits while phosphorylation at Ser-1690 abolishes G(i) alpha subunit binding, promoting binding to GNAS. Interacts (via C-terminal SH2-like region) with growth factor receptors EGFR, INSR and KDR/VEGFR2 (via their autophosphorylated cytoplasmic tails). Forms a complex with EGFR and GNAI3 which leads to enhanced EGFR signaling and triggering of cell migration; ligand stimulation is required for recruitment of GNAI3 to the complex. Interacts (tyrosine-phosphorylated form) with phosphatidylinositol 3-kinase (PI3K) regulatory subunit PIK3R1/p85a (via SH2 domains); the interaction enables recruitment of PIK3R1 to the EGFR receptor, enhancing PI3K activity and cell migration. Interacts with serine/threonine-protein kinase PRKCQ; the interaction leads to phosphorylation of CCDC88A and inhibition of its guanine nucleotide exchange factor activity. Interacts (via C-terminus) with DISC1; the interaction is direct. Interacts with AKT proteins; the interaction is inhibited in the presence of DISC1. Interacts with AKT1/PKB (via C-terminus). The non-phosphorylated form interacts with phosphatidylinositol 4-phosphate [PI(4)P] and weakly with phosphatidylinositol 3-phosphate [PI(3)P]. Interacts with microtubules. Interacts with actin. In terms of processing, phosphorylation is induced by epidermal growth factor (EGF) in a phosphoinositide 3-kinase (PI3K)-dependent manner. Phosphorylation by AKT1/PKB is necessary for delocalization from the cell membrane and for cell migration. Phosphorylated on tyrosine residues which promotes binding to phosphatidylinositol 3-kinase (PI3K) regulatory subunit PIK3R1/p85a and enhances PI3K activity. Tyrosine-phosphorylated by both receptor and non-receptor tyrosine kinases in vitro. Tyrosine phosphorylation is required for AKT1-dependent phosphorylation of Ser-1417. Phosphorylation at Ser-1690 by PRKCQ disrupts interaction with GNAI3 and inhibits guanine nucleotide exchange factor activity. As to expression, expressed ubiquitously.

It is found in the cell membrane. Its subcellular location is the cytoplasm. The protein resides in the cytosol. It localises to the cytoplasmic vesicle. The protein localises to the cell projection. It is found in the lamellipodium. Its subcellular location is the cytoskeleton. The protein resides in the cilium basal body. It localises to the microtubule organizing center. The protein localises to the centrosome. It is found in the centriole. Functionally, bifunctional modulator of guanine nucleotide-binding proteins (G proteins). Acts as a non-receptor guanine nucleotide exchange factor which binds to and activates guanine nucleotide-binding protein G(i) alpha subunits. Also acts as a guanine nucleotide dissociation inhibitor for guanine nucleotide-binding protein G(s) subunit alpha GNAS. Essential for cell migration. Interacts in complex with G(i) alpha subunits with the EGFR receptor, retaining EGFR at the cell membrane following ligand stimulation and promoting EGFR signaling which triggers cell migration. Binding to Gi-alpha subunits displaces the beta and gamma subunits from the heterotrimeric G-protein complex which enhances phosphoinositide 3-kinase (PI3K)-dependent phosphorylation and kinase activity of AKT1/PKB. Phosphorylation of AKT1/PKB induces the phosphorylation of downstream effectors GSK3 and FOXO1/FKHR, and regulates DNA replication and cell proliferation. Binds in its tyrosine-phosphorylated form to the phosphatidylinositol 3-kinase (PI3K) regulatory subunit PIK3R1 which enables recruitment of PIK3R1 to the EGFR receptor, enhancing PI3K activity and cell migration. Plays a role as a key modulator of the AKT-mTOR signaling pathway, controlling the tempo of the process of newborn neuron integration during adult neurogenesis, including correct neuron positioning, dendritic development and synapse formation. Inhibition of G(s) subunit alpha GNAS leads to reduced cellular levels of cAMP and suppression of cell proliferation. Essential for the integrity of the actin cytoskeleton. Required for formation of actin stress fibers and lamellipodia. May be involved in membrane sorting in the early endosome. Plays a role in ciliogenesis and cilium morphology and positioning and this may partly be through regulation of the localization of scaffolding protein CROCC/Rootletin. In Homo sapiens (Human), this protein is Girdin (CCDC88A).